The primary structure comprises 102 residues: Large ribosomal subunit protein bL21 (102 aa).

It belongs to the bacterial ribosomal protein bL21 family. In terms of assembly, part of the 50S ribosomal subunit. Contacts protein L20.

In terms of biological role, this protein binds to 23S rRNA in the presence of protein L20. The chain is Large ribosomal subunit protein bL21 from Oceanobacillus iheyensis (strain DSM 14371 / CIP 107618 / JCM 11309 / KCTC 3954 / HTE831).